The following is a 696-amino-acid chain: MAMARLGSWLGEAQWLALVSLFVAALATVGLYLAQWALARARPQPQRRAVEPGEGPRPGSDALLSWILTLGSWRSQWQAAWVTALNEEAERKGGPPFLSFEEDPRQQALELVVQEVSSVLRSAEEKVVVCHVVGQAIQFLVSETPALGAGCRLYDMRLSPFHLQLEFHMKEKREDLQISWSFISVPEMAVNIQPKALGEDQVAETSAMSDVLKDILKHLAGSASPSVVLITKPTTVKEAQNLQCAASTAQESCPPKPPRAHELKLLVRNIHVLLLSEPGASGHINAVCVVQLNDPVQRFSSTLTKNTPDLMWEEEFTFELNAKSKELHLQISEAGRSSEGLLATATVPLDLFKKQPSGPQSFTLTSGSACGSSVLGSVTAEFSYMEPGELKSWPIPPPVPAAKIEKDRTVMPCGTVVTTVTAVKTKPRVDVGRASPLSSDSPVKTPIKVKVIEKDISVQAIACRSAPVSKTLSSSDTELLVLNGSDPVAEVAIRQLSESSKLKLKSPRKKSTIIISGISKTSLSQDHDAALMQGYTASVDSTHQEDAPSHPERAAASAPPEEAESAQASLAPKPQEDELDSWDLEKEPQAAAWSSQVLLDPDGDELSESSMSVLEPGTAKKHKGGILRKGAKLFFRRRHQQKDPGMSQSHNDLVFLEQPEGSRRKGITLTRILNKKLLSRHRNKNTMNGAPVEPCT.

The chain crosses the membrane as a helical span at residues 13–33 (AQWLALVSLFVAALATVGLYL). The region spanning 51-242 (EPGEGPRPGS…PTTVKEAQNL (192 aa)) is the SMP-LBD domain. Residue serine 60 is modified to Phosphoserine. One can recognise a C2 domain in the interval 245-362 (AASTAQESCP…KKQPSGPQSF (118 aa)). A phosphoserine mark is found at serine 435 and serine 441. Threonine 445 is modified (phosphothreonine). Residues 539–580 (VDSTHQEDAPSHPERAAASAPPEEAESAQASLAPKPQEDELD) are disordered. Residues 542–553 (THQEDAPSHPER) show a composition bias toward basic and acidic residues. The span at 554–572 (AAASAPPEEAESAQASLAP) shows a compositional bias: low complexity. Serine 581 carries the post-translational modification Phosphoserine.

It localises to the membrane. The protein is C2 domain-containing protein 2 (C2CD2) of Homo sapiens (Human).